Consider the following 1179-residue polypeptide: ATP-dependent helicase/deoxyribonuclease subunit B (1179 aa).

It belongs to the helicase family. AddB/RexB type 2 subfamily. Heterodimer of AddA and RexB. Mg(2+) is required as a cofactor.

The heterodimer acts as both an ATP-dependent DNA helicase and an ATP-dependent, dual-direction single-stranded exonuclease. Recognizes the chi site generating a DNA molecule suitable for the initiation of homologous recombination. This subunit has 5' -&gt; 3' nuclease activity but not helicase activity. This is ATP-dependent helicase/deoxyribonuclease subunit B from Lactobacillus delbrueckii subsp. bulgaricus (strain ATCC BAA-365 / Lb-18).